We begin with the raw amino-acid sequence, 1193 residues long: DNA-directed RNA polymerase subunit beta (1193 aa).

The segment at 1173 to 1193 is disordered; it reads QQAKEAAELEKAKEEALDKTE. Positions 1177-1193 are enriched in basic and acidic residues; sequence EAAELEKAKEEALDKTE.

It belongs to the RNA polymerase beta chain family. As to quaternary structure, the RNAP catalytic core consists of 2 alpha, 1 beta, 1 beta' and 1 omega subunit. When a sigma factor is associated with the core the holoenzyme is formed, which can initiate transcription.

It catalyses the reaction RNA(n) + a ribonucleoside 5'-triphosphate = RNA(n+1) + diphosphate. DNA-dependent RNA polymerase catalyzes the transcription of DNA into RNA using the four ribonucleoside triphosphates as substrates. The sequence is that of DNA-directed RNA polymerase subunit beta from Streptococcus thermophilus (strain CNRZ 1066).